We begin with the raw amino-acid sequence, 83 residues long: Putative defensin-like protein 110 (83 aa).

A signal peptide spans 1–24; the sequence is MAITKKNLIAFVFTILFVISYVHC. 4 disulfide bridges follow: Cys-43/Cys-81, Cys-49/Cys-73, Cys-59/Cys-79, and Cys-63/Cys-80.

The protein belongs to the DEFL family.

It localises to the secreted. The sequence is that of Putative defensin-like protein 110 from Arabidopsis thaliana (Mouse-ear cress).